We begin with the raw amino-acid sequence, 267 residues long: Small ribosomal subunit protein mS23 (267 aa).

Residues 230 to 267 (VKTASKDGKSSNGSMGAEDVVEKTTSAWETEFVEEESS) form a disordered region.

It belongs to the mitochondrion-specific ribosomal protein mS23 family. Component of the mitochondrial small ribosomal subunit.

Its subcellular location is the mitochondrion. In Meyerozyma guilliermondii (strain ATCC 6260 / CBS 566 / DSM 6381 / JCM 1539 / NBRC 10279 / NRRL Y-324) (Yeast), this protein is Small ribosomal subunit protein mS23 (RSM25).